Reading from the N-terminus, the 892-residue chain is Protein argonaute 11 (892 aa).

A compositionally biased stretch (gly residues) spans 1 to 17; it reads MSSRGGGVGGRRGGPGG. Disordered stretches follow at residues 1 to 68 and 86 to 117; these read MSSR…ALQP and MEAREGASSSSSASAPAVGEVEPPSRAVGALP. A compositionally biased stretch (low complexity) spans 86–107; sequence MEAREGASSSSSASAPAVGEVE. The region spanning 248–362 is the PAZ domain; the sequence is SLKQFLAGTY…LPMEVCRIVK (115 aa). Residues 541–848 enclose the Piwi domain; sequence LLVIVLPDAN…AASRARHYLE (308 aa). The disordered stretch occupies residues 850 to 876; sequence GSLPDHGSSSASAAGGSRRNDRGVPVK. The segment covering 856-866 has biased composition (low complexity); sequence GSSSASAAGGS. A compositionally biased stretch (basic and acidic residues) spans 867-876; sequence RRNDRGVPVK.

This sequence belongs to the argonaute family. Ago subfamily.

Its function is as follows. Probably involved in the RNA silencing pathway. May bind to short RNAs such as microRNAs (miRNAs) or short interfering RNAs (siRNAs), and represses the translation of mRNAs which are complementary to them. The protein is Protein argonaute 11 (AGO11) of Oryza sativa subsp. japonica (Rice).